The chain runs to 238 residues: Ribonuclease PH (238 aa).

Residues Arg-86 and 124 to 126 (GTR) each bind phosphate.

It belongs to the RNase PH family. Homohexameric ring arranged as a trimer of dimers.

It carries out the reaction tRNA(n+1) + phosphate = tRNA(n) + a ribonucleoside 5'-diphosphate. In terms of biological role, phosphorolytic 3'-5' exoribonuclease that plays an important role in tRNA 3'-end maturation. Removes nucleotide residues following the 3'-CCA terminus of tRNAs; can also add nucleotides to the ends of RNA molecules by using nucleoside diphosphates as substrates, but this may not be physiologically important. Probably plays a role in initiation of 16S rRNA degradation (leading to ribosome degradation) during starvation. In Brucella abortus (strain S19), this protein is Ribonuclease PH.